We begin with the raw amino-acid sequence, 164 residues long: Respiratory growth induced protein 2 (164 aa).

It belongs to the RGI1 family.

It is found in the cytoplasm. Its function is as follows. Involved in the control of energetic metabolism and significantly contribute to cell fitness, especially under respiratory growth conditions. In Saccharomyces cerevisiae (strain JAY291) (Baker's yeast), this protein is Respiratory growth induced protein 2 (RGI2).